A 441-amino-acid chain; its full sequence is Xylose isomerase (441 aa).

Active-site residues include histidine 100 and aspartate 103. The Mg(2+) site is built by glutamate 231, glutamate 267, histidine 270, aspartate 295, aspartate 306, aspartate 308, and aspartate 338.

Belongs to the xylose isomerase family. Homotetramer. Requires Mg(2+) as cofactor.

It localises to the cytoplasm. The enzyme catalyses alpha-D-xylose = alpha-D-xylulofuranose. The protein is Xylose isomerase of Paraburkholderia phymatum (strain DSM 17167 / CIP 108236 / LMG 21445 / STM815) (Burkholderia phymatum).